Reading from the N-terminus, the 1042-residue chain is Isoleucine--tRNA ligase (1042 aa).

The 'HIGH' region signature appears at 59–69 (PFANGLPHYGH). The 'KMSKS' region signature appears at 619 to 623 (KMSKS). K622 contributes to the ATP binding site.

Belongs to the class-I aminoacyl-tRNA synthetase family. IleS type 2 subfamily. As to quaternary structure, monomer. Zn(2+) serves as cofactor.

It is found in the cytoplasm. The catalysed reaction is tRNA(Ile) + L-isoleucine + ATP = L-isoleucyl-tRNA(Ile) + AMP + diphosphate. Catalyzes the attachment of isoleucine to tRNA(Ile). As IleRS can inadvertently accommodate and process structurally similar amino acids such as valine, to avoid such errors it has two additional distinct tRNA(Ile)-dependent editing activities. One activity is designated as 'pretransfer' editing and involves the hydrolysis of activated Val-AMP. The other activity is designated 'posttransfer' editing and involves deacylation of mischarged Val-tRNA(Ile). This Nocardia farcinica (strain IFM 10152) protein is Isoleucine--tRNA ligase.